Reading from the N-terminus, the 448-residue chain is Allantoinase (448 aa).

Zn(2+) is bound by residues histidine 60, histidine 62, lysine 147, histidine 183, histidine 239, and aspartate 312. N6-carboxylysine is present on lysine 147.

The protein belongs to the metallo-dependent hydrolases superfamily. Allantoinase family. As to quaternary structure, homotetramer. Zn(2+) serves as cofactor. Post-translationally, carboxylation allows a single lysine to coordinate two zinc ions.

The catalysed reaction is (S)-allantoin + H2O = allantoate + H(+). It functions in the pathway nitrogen metabolism; (S)-allantoin degradation; allantoate from (S)-allantoin: step 1/1. Catalyzes the conversion of allantoin (5-ureidohydantoin) to allantoic acid by hydrolytic cleavage of the five-member hydantoin ring. The protein is Allantoinase of Deinococcus radiodurans (strain ATCC 13939 / DSM 20539 / JCM 16871 / CCUG 27074 / LMG 4051 / NBRC 15346 / NCIMB 9279 / VKM B-1422 / R1).